The primary structure comprises 382 residues: Deoxyuridine 5'-triphosphate nucleotidohydrolase (382 aa).

Residues 1 to 12 (MIKPNIPAPVRP) show a composition bias toward pro residues. 2 disordered regions span residues 1–60 (MIKP…MMIS) and 97–118 (LLRDGPEAPPREPTPKEARRPE). The span at 100–118 (DGPEAPPREPTPKEARRPE) shows a compositional bias: basic and acidic residues.

Belongs to the dUTPase family. Mg(2+) is required as a cofactor.

The catalysed reaction is dUTP + H2O = dUMP + diphosphate + H(+). The protein operates within pyrimidine metabolism; dUMP biosynthesis; dUMP from dCTP (dUTP route): step 2/2. Its function is as follows. Involved in nucleotide metabolism: produces dUMP, the immediate precursor of thymidine nucleotides and decreases the intracellular concentration of dUTP to avoid uracil incorporation into viral DNA. In Murid herpesvirus 1 (strain Smith) (MuHV-1), this protein is Deoxyuridine 5'-triphosphate nucleotidohydrolase.